The chain runs to 136 residues: MALWLTVVIAFTCIGGLASPVPTPSPKALKELIEELVNITQNQKAPLCNGSMVWSINLTTSMYCAARESLINITNCSVIQRTQRMLNALCPHKLSAKVSSEHVRDTKIEVTQFIKTLLQHSRNVFHYRSFNWSKKS.

Positions 1-18 (MALWLTVVIAFTCIGGLA) are cleaved as a signal peptide. N38, N49, N57, N72, N75, and N131 each carry an N-linked (GlcNAc...) asparagine glycan. 2 disulfide bridges follow: C48-C76 and C64-C90.

The protein belongs to the IL-4/IL-13 family. In terms of assembly, interacts with IL13RA2.

The protein resides in the secreted. Its function is as follows. Cytokine that plays important roles in allergic inflammation and immune response to parasite infection. Synergizes with IL2 in regulating interferon-gamma synthesis. Stimulates B-cell proliferation, and activation of eosinophils, basophils, and mast cells. Plays an important role in controlling IL33 activity by modulating the production of transmembrane and soluble forms of interleukin-1 receptor-like 1/IL1RL1. Displays the capacity to antagonize Th1-driven proinflammatory immune response and downregulates synthesis of many proinflammatory cytokines including IL1, IL6, IL10, IL12 and TNF-alpha through a mechanism that partially involves suppression of NF-kappa-B. Also functions on nonhematopoietic cells, including endothelial cells where it induces vascular cell adhesion protein 1/VCAM1, which is important in the recruitment of eosinophils. Exerts its biological effects through its receptors which comprises the IL4R chain and the IL13RA1 chain, to activate JAK1 and TYK2, leading to the activation of STAT6. Aside from IL13RA1, another receptor IL13RA2 acts as a high affinity decoy for IL13 and mediates internalization and depletion of extracellular IL13. This is Interleukin-13 (IL13) from Camelus bactrianus (Bactrian camel).